The following is a 447-amino-acid chain: Tubulin beta chain (447 aa).

The GTP site is built by glutamine 11, glutamate 69, serine 138, glycine 142, threonine 143, glycine 144, asparagine 204, and asparagine 226. Glutamate 69 provides a ligand contact to Mg(2+). The segment at 427 to 447 (DAGIDEEEEEYEEELPLEGEE) is disordered. The span at 429–447 (GIDEEEEEYEEELPLEGEE) shows a compositional bias: acidic residues.

It belongs to the tubulin family. In terms of assembly, dimer of alpha and beta chains. A typical microtubule is a hollow water-filled tube with an outer diameter of 25 nm and an inner diameter of 15 nM. Alpha-beta heterodimers associate head-to-tail to form protofilaments running lengthwise along the microtubule wall with the beta-tubulin subunit facing the microtubule plus end conferring a structural polarity. Microtubules usually have 13 protofilaments but different protofilament numbers can be found in some organisms and specialized cells. It depends on Mg(2+) as a cofactor.

It is found in the cytoplasm. Its subcellular location is the cytoskeleton. Functionally, tubulin is the major constituent of microtubules, a cylinder consisting of laterally associated linear protofilaments composed of alpha- and beta-tubulin heterodimers. Microtubules grow by the addition of GTP-tubulin dimers to the microtubule end, where a stabilizing cap forms. Below the cap, tubulin dimers are in GDP-bound state, owing to GTPase activity of alpha-tubulin. This Hapsidospora chrysogena (Acremonium chrysogenum) protein is Tubulin beta chain (TUB2).